A 247-amino-acid chain; its full sequence is LHFPL tetraspan subfamily member 4 protein (247 aa).

Helical transmembrane passes span 22–42 (IGVL…VVFI), 97–117 (FFVL…SLFF), 127–147 (ICAW…MIFP), and 178–198 (ILAI…FVLG).

The protein belongs to the LHFP family. As to quaternary structure, interacts with GABA(A) receptor subunits. Identified in a complex of 720 kDa composed of LHFPL4, NLGN2, GABRA1, GABRB2, GABRG2 and GABRB3. Interacts with GABRB3. Interacts with GABRA2. Interacts with GABRG2. Interacts with GABRA1. Interacts with NLGN2; leading to mutual regulation of protein level and synaptic clustering.

Its subcellular location is the cell projection. It localises to the dendrite. The protein localises to the postsynaptic cell membrane. Plays a role in the regulation of inhibitory synapse formation and function by being involved in maintening gamma-aminobutyric acid receptors (GABAARs) clustering and their associated scaffold proteins at inhibitory synaptic sites. Acts in concert with NLGN2 to recruit or stabilize GABAARs. This chain is LHFPL tetraspan subfamily member 4 protein, found in Homo sapiens (Human).